Consider the following 843-residue polypeptide: Aminopeptidase N (843 aa).

Substrate-binding positions include Glu120 and 252–256 (GAMEN). Residue His288 coordinates Zn(2+). Glu289 acts as the Proton acceptor in catalysis. His292 and Glu311 together coordinate Zn(2+).

The protein belongs to the peptidase M1 family. Monomer. The cofactor is Zn(2+).

The protein resides in the cytoplasm. It catalyses the reaction Release of an N-terminal amino acid, Xaa-|-Yaa- from a peptide, amide or arylamide. Xaa is preferably Ala, but may be most amino acids including Pro (slow action). When a terminal hydrophobic residue is followed by a prolyl residue, the two may be released as an intact Xaa-Pro dipeptide.. Its function is as follows. Aminopeptidase with broad substrate specificity to several peptides. The sequence is that of Aminopeptidase N (pepN) from Lactobacillus delbrueckii subsp. lactis.